Here is a 97-residue protein sequence, read N- to C-terminus: YcgL domain-containing protein PST_1364 (97 aa).

Residues 3–87 enclose the YcgL domain; the sequence is LICSIYKSPR…AEDEYIEHLP (85 aa).

The chain is YcgL domain-containing protein PST_1364 from Stutzerimonas stutzeri (strain A1501) (Pseudomonas stutzeri).